A 453-amino-acid chain; its full sequence is tRNA hydroxylation protein P (453 aa).

It belongs to the peptidase U32 family.

In terms of biological role, involved in prephenate-dependent formation of 5-hydroxyuridine (ho5U) modification at position 34 in tRNAs, the first step in 5-carboxymethoxyuridine (cmo5U) biosynthesis. Involved differently in ho5U formation in each tRNA; tRNA(Leu3) and tRNA(Pro3) are major targets of TrhP. The polypeptide is tRNA hydroxylation protein P (Escherichia coli (strain K12)).